A 401-amino-acid chain; its full sequence is MSNKNIVLAFSGGLDTSFCIPYLKEQGYAVHTVFADTGGVDEDERDFIEKRAAELGVASHLTVDGGPAIWDGFVKQLVWAGEAYQGQYPLLVSDRYLIVDAVLQRADALGTCAVAHGCTGMGNDQVRFDLAIKAQGDYTIIAPIREIQKEHTQTRLYEQKYLEERGFGVRAKQKNYTINENLLGITLSGGEIDKWEAPGEGARGWCAPRSAWPTDPLTVAIKFVEGEAVAVDGKPLSGPQILMKLNKLFASYGVGRGIYTGDTVIGLKGRIVYEAPGLTALLTAHRALEDAVLTKQQNRFKPHIARKWVELVYEGFFHDPLKTDLETFLKSSQANVNGEIVLETRGGRVDAVAVRSPHILTSKGVTYAQTADWGIEEAEGFIKLFGMSSTLYAHVNRSLRS.

ATP is bound by residues 9 to 17 (AFSGGLDTS) and A35. Y88 and S93 together coordinate L-citrulline. Position 117 (G117) interacts with ATP. Positions 119, 123, and 124 each coordinate L-aspartate. N123 is an L-citrulline binding site. The L-citrulline site is built by R127 and Y273.

This sequence belongs to the argininosuccinate synthase family. Type 1 subfamily. As to quaternary structure, homotetramer.

It is found in the cytoplasm. The catalysed reaction is L-citrulline + L-aspartate + ATP = 2-(N(omega)-L-arginino)succinate + AMP + diphosphate + H(+). The protein operates within amino-acid biosynthesis; L-arginine biosynthesis; L-arginine from L-ornithine and carbamoyl phosphate: step 2/3. The protein is Argininosuccinate synthase of Xylella fastidiosa (strain Temecula1 / ATCC 700964).